Here is a 506-residue protein sequence, read N- to C-terminus: GMP synthase [glutamine-hydrolyzing] (506 aa).

The Glutamine amidotransferase type-1 domain maps to 4–192 (KLIILDFGSQ…FLDICGMKRD (189 aa)). The active-site Nucleophile is the Cys-79. Active-site residues include His-167 and Glu-169. One can recognise a GMPS ATP-PPase domain in the interval 193-381 (WTPASFIEAT…LGMMPHLIHR (189 aa)). Residue 220–226 (SGGVDSS) participates in ATP binding.

As to quaternary structure, homodimer.

It catalyses the reaction XMP + L-glutamine + ATP + H2O = GMP + L-glutamate + AMP + diphosphate + 2 H(+). It participates in purine metabolism; GMP biosynthesis; GMP from XMP (L-Gln route): step 1/1. Functionally, catalyzes the synthesis of GMP from XMP. This Porphyromonas gingivalis (strain ATCC BAA-308 / W83) protein is GMP synthase [glutamine-hydrolyzing].